The following is a 543-amino-acid chain: Glutamyl-tRNA(Gln) amidotransferase subunit A, chloroplastic/mitochondrial (543 aa).

Catalysis depends on charge relay system residues K121 and S196. The Acyl-ester intermediate role is filled by S220.

This sequence belongs to the amidase family. GatA subfamily. As to quaternary structure, subunit of the heterotrimeric GatCAB amidotransferase (AdT) complex, composed of A, B and C subunits.

Its subcellular location is the mitochondrion. The protein resides in the plastid. It is found in the chloroplast stroma. It carries out the reaction L-glutamyl-tRNA(Gln) + L-glutamine + ATP + H2O = L-glutaminyl-tRNA(Gln) + L-glutamate + ADP + phosphate + H(+). Allows the formation of correctly charged Gln-tRNA(Gln) through the transamidation of misacylated Glu-tRNA(Gln) in chloroplasts and mitochondria. The reaction takes place in the presence of glutamine and ATP through an activated gamma-phospho-Glu-tRNA(Gln). The polypeptide is Glutamyl-tRNA(Gln) amidotransferase subunit A, chloroplastic/mitochondrial (Zea mays (Maize)).